The sequence spans 641 residues: Chaperone protein DnaK (641 aa).

A Phosphothreonine; by autocatalysis modification is found at Thr-198. Composition is skewed to basic and acidic residues over residues 514–529 (AEAN…EGVE), 540–554 (SSEK…KVSE), and 608–621 (AHAD…RSGD). Disordered stretches follow at residues 514 to 554 (AEAN…KVSE) and 604 to 641 (QTES…KRSA). Residues 622–633 (DVVDADYEEVKD) show a composition bias toward acidic residues.

It belongs to the heat shock protein 70 family.

In terms of biological role, acts as a chaperone. This chain is Chaperone protein DnaK, found in Sinorhizobium medicae (strain WSM419) (Ensifer medicae).